The primary structure comprises 169 residues: S-ribosylhomocysteine lyase (169 aa).

Residues histidine 54, histidine 58, and cysteine 129 each coordinate Fe cation.

It belongs to the LuxS family. As to quaternary structure, homodimer. Fe cation is required as a cofactor.

The enzyme catalyses S-(5-deoxy-D-ribos-5-yl)-L-homocysteine = (S)-4,5-dihydroxypentane-2,3-dione + L-homocysteine. Functionally, involved in the synthesis of autoinducer 2 (AI-2) which is secreted by bacteria and is used to communicate both the cell density and the metabolic potential of the environment. The regulation of gene expression in response to changes in cell density is called quorum sensing. Catalyzes the transformation of S-ribosylhomocysteine (RHC) to homocysteine (HC) and 4,5-dihydroxy-2,3-pentadione (DPD). In Actinobacillus pleuropneumoniae serotype 5b (strain L20), this protein is S-ribosylhomocysteine lyase.